Consider the following 251-residue polypeptide: Small ribosomal subunit protein uS2 (251 aa).

This sequence belongs to the universal ribosomal protein uS2 family.

The polypeptide is Small ribosomal subunit protein uS2 (Nitrosomonas europaea (strain ATCC 19718 / CIP 103999 / KCTC 2705 / NBRC 14298)).